Reading from the N-terminus, the 183-residue chain is MASSLMSNAATTMAAATTTAQANMVAPFNGLKSVSAFPVTRKNNDITSVASNGGRVQCMQVWPPLGKKKFETLSYLPPLSEESLMKEVQYLLNNGWVPCLEFEPTHGFVYREHGNTPGYYDGRYWTMWKLPMFGCTDPSQVVAELEEAKKAYPEAFIRIIGFDNVRQVQCISFIAYKPASYDA.

The N-terminal 57 residues, 1–57 (MASSLMSNAATTMAAATTTAQANMVAPFNGLKSVSAFPVTRKNNDITSVASNGGRVQ), are a transit peptide targeting the chloroplast.

The protein belongs to the RuBisCO small chain family. As to quaternary structure, heterohexadecamer of 8 large and 8 small subunits.

It localises to the plastid. The protein resides in the chloroplast. Functionally, ruBisCO catalyzes two reactions: the carboxylation of D-ribulose 1,5-bisphosphate, the primary event in carbon dioxide fixation, as well as the oxidative fragmentation of the pentose substrate. Both reactions occur simultaneously and in competition at the same active site. Although the small subunit is not catalytic it is essential for maximal activity. This Mesembryanthemum crystallinum (Common ice plant) protein is Ribulose bisphosphate carboxylase small subunit, chloroplastic 3.